Here is a 312-residue protein sequence, read N- to C-terminus: Urease accessory protein 7 (312 aa).

The tract at residues 28-86 (QEATGTDSHHAHHHHTPSGASSAISHTHDNMPHDHGQFHDHGPGLWTPEEHGHTHEHLE) is disordered. Residues 36 to 87 (HHAHHHHTPSGASSAISHTHDNMPHDHGQFHDHGPGLWTPEEHGHTHEHLEH) form a histine rich nickel-binding domain region. The segment covering 53-86 (HTHDNMPHDHGQFHDHGPGLWTPEEHGHTHEHLE) has biased composition (basic and acidic residues). The GTP binding P-loop motif lies at 115–122 (GPVGSGKT). The Switch domain 1 signature appears at 147 to 154 (TREDQEFL). The short motif at 171–172 (GG) is the switch domain 2 element.

It belongs to the SIMIBI class G3E GTPase family. UreG subfamily. In terms of assembly, URE4, URE6 and URE7 may form a complex that acts as a GTP-hydrolysis-dependent molecular chaperone, activating the urease apoprotein URE1.

Its function is as follows. Urease accessory protein that binds 2 nickel atoms likely via its conserved histidine-rich domain and supplies nickel for the functional urease URE1. Has probably a dual function as a nickel chaperone and GTPase. Plays a role in host brain invasion. The protein is Urease accessory protein 7 of Cryptococcus neoformans var. grubii serotype A (strain H99 / ATCC 208821 / CBS 10515 / FGSC 9487) (Filobasidiella neoformans var. grubii).